The following is a 1133-amino-acid chain: Guanine nucleotide-binding protein G(s) subunit alpha isoforms XLas (1133 aa).

4 disordered regions span residues 1–195 (MGMF…PEAL), 322–552 (DDTA…VPGA), 611–648 (SASAAPSRAHLRPPSPEIQVADPPTPRPPPRPTAWPDK), and 724–744 (RSRSLSPGKAKDPMEERRKQM). Low complexity predominate over residues 31 to 48 (LEAPGAAAPGAGAGPAEE). Positions 347 to 362 (DKSECAERPPVEREAA) are enriched in basic and acidic residues. Composition is skewed to low complexity over residues 391–404 (PEAMDAKPAPAAQA), 459–471 (GGAAPVAPATPAE), 482–498 (AEPASEAVPATTAESAS), 515–525 (ATLAEPAARAA), and 535–552 (RAVPSARAHPAAGAVPGA). Positions 633–643 (PPTPRPPPRPT) are enriched in pro residues. Residues 732–744 (KAKDPMEERRKQM) show a composition bias toward basic and acidic residues. Residues 737–761 (MEERRKQMRKEAIEMREQKRADKKR) are a coiled coil. Positions 778–1133 (CTHRLLLLGA…RMHLRQYELL (356 aa)) constitute a G-alpha domain. Residues 781–794 (RLLLLGAGESGKST) form a G1 motif region. 786 to 794 (GAGESGKST) is a binding site for GTP. S793 provides a ligand contact to Mg(2+). A disordered region spans residues 807-828 (FNGEGGEEDPQAARSNSDGEKA). The G2 motif stretch occupies residues 935 to 943 (DLLRCRVLT). Residues 936 to 943 (LLRCRVLT), 962 to 966 (DVGGQ), and 1031 to 1034 (NKQD) each bind GTP. R940 carries the post-translational modification ADP-ribosylarginine; by cholera toxin. Residue T943 coordinates Mg(2+). The tract at residues 958 to 967 (FHMFDVGGQR) is G3 motif. A G4 motif region spans residues 1027–1034 (ILFLNKQD). S1091 carries the post-translational modification Phosphoserine. The G5 motif stretch occupies residues 1103-1108 (TCAVDT). Position 1105 (A1105) interacts with GTP.

Belongs to the G-alpha family. G(s) subfamily. As to quaternary structure, g proteins are composed of 3 units; alpha, beta and gamma. The alpha chain contains the guanine nucleotide binding site. Interacts through its N-terminal region with ALEX which is produced from the same locus in a different open reading frame. This interaction may inhibit its adenylyl cyclase-stimulating activity. Interacts with MAGED2.

The protein localises to the cell membrane. It is found in the apical cell membrane. It carries out the reaction GTP + H2O = GDP + phosphate + H(+). In terms of biological role, guanine nucleotide-binding proteins (G proteins) function as transducers in numerous signaling pathways controlled by G protein-coupled receptors (GPCRs). The alpha chain contains the guanine nucleotide binding site and alternates between an active, GTP-bound state and an inactive, GDP-bound state. Signaling by an activated GPCR promotes GDP release and GTP binding. The alpha subunit has a low GTPase activity that converts bound GTP to GDP, thereby terminating the signal. Both GDP release and GTP hydrolysis are modulated by numerous regulatory proteins. Signaling involves the activation of adenylyl cyclases, resulting in increased levels of the signaling molecule cAMP. GNAS functions downstream of several GPCRs, including beta-adrenergic receptors. XLas isoforms interact with the same set of receptors as Gnas isoforms. This chain is Guanine nucleotide-binding protein G(s) subunit alpha isoforms XLas, found in Mus musculus (Mouse).